An 80-amino-acid polypeptide reads, in one-letter code: KSTELLIRKLPFQRLVREIAQDFKTDLRFQSHAVLALQEAAEAYLVGLFEDTNLCAIHAKRVTIMPKDIQLARRIRGERA.

This sequence belongs to the histone H3 family. In terms of assembly, the nucleosome is a histone octamer containing two molecules each of H2A, H2B, H3 and H4 assembled in one H3-H4 heterotetramer and two H2A-H2B heterodimers. The octamer wraps approximately 147 bp of DNA.

It is found in the nucleus. It localises to the chromosome. Variant histone H3 which replaces conventional H3 in a wide range of nucleosomes in active genes. Constitutes the predominant form of histone H3 in non-dividing cells and is incorporated into chromatin independently of DNA synthesis. Deposited at sites of nucleosomal displacement throughout transcribed genes, suggesting that it represents an epigenetic imprint of transcriptionally active chromatin. Nucleosomes wrap and compact DNA into chromatin, limiting DNA accessibility to the cellular machineries which require DNA as a template. Histones thereby play a central role in transcription regulation, DNA repair, DNA replication and chromosomal stability. DNA accessibility is regulated via a complex set of post-translational modifications of histones, also called histone code, and nucleosome remodeling. The chain is Histone H3.3 from Hordeum vulgare (Barley).